The primary structure comprises 2426 residues: Protein SON (2426 aa).

Ala-2 is subject to N-acetylalanine. Lys-16 carries the post-translational modification N6-acetyllysine. Polar residues predominate over residues 24 to 42 (LSSGRNEGQLNGETNTPIE). The tract at residues 24–56 (LSSGRNEGQLNGETNTPIEGNQAGDAAASARSL) is disordered. Residue Lys-64 forms a Glycyl lysine isopeptide (Lys-Gly) (interchain with G-Cter in SUMO2) linkage. A compositionally biased stretch (basic and acidic residues) spans 77 to 88 (LRYKPDLKEGSR). Residues 77–155 (LRYKPDLKEG…GNIDLESDSF (79 aa)) form a disordered region. Ser-94 is subject to Phosphoserine. Basic residues predominate over residues 106 to 130 (KKSKKHKKHKNKKKKKKKEKEKKYK). Basic and acidic residues predominate over residues 131–146 (RQPEESESKTKSHDDG). Residues Ser-142, Ser-152, Ser-154, Ser-160, and Ser-283 each carry the phosphoserine modification. The residue at position 288 (Lys-288) is an N6-acetyllysine. Residues 305–328 (TLVVSSETPTEVYPEPSTSTTMDF) are disordered. A Phosphothreonine modification is found at Thr-400. A disordered region spans residues 406-442 (PGPSATPVPELPGPLSTPVPELPGPPATAVPELPGPS). The span at 409–442 (SATPVPELPGPLSTPVPELPGPPATAVPELPGPS) shows a compositional bias: pro residues. The segment at 726 to 895 (LASNTMDSQM…LASGTMDAQM (170 aa)) is 17 X 10 AA tandem repeats of L-A-[ST]-[NSG]-[TS]-MDSQM. The segment at 912–988 (DPYRLAQDPY…IAPRPYRLAP (77 aa)) is 11 X 7 AA tandem repeats of [DR]-P-Y-R-[LI][AG][QHP]. Arg-950 carries the omega-N-methylarginine modification. Thr-959 carries the phosphothreonine modification. Ser-998 is modified (phosphoserine). Tandem repeats lie at residues 1006 to 1011 (ERSMMS), 1014 to 1019 (ERSMMS), 1021 to 1026 (ERSMMS), 1030 to 1035 (ERSMMS), 1038 to 1043 (ERSMMS), 1046 to 1051 (ERSMMS), 1055 to 1060 (ERSMMS), 1063 to 1068 (ERSMMS), 1071 to 1076 (ERSMMS), 1080 to 1085 (DRSMMS), 1089 to 1094 (DRSMMS), 1100 to 1105 (DRSMMS), 1111 to 1116 (DRSMMS), and 1121 to 1126 (DRSMMS). Residues 1006 to 1126 (ERSMMSSYER…SYTADRSMMS (121 aa)) are 14 X 6 AA repeats of [ED]-R-S-M-M-S. An Asymmetric dimethylarginine modification is found at Arg-1007. Asymmetric dimethylarginine is present on Arg-1022. 2 positions are modified to phosphoserine: Ser-1035 and Ser-1043. 2 positions are modified to phosphoserine: Ser-1060 and Ser-1068. At Ser-1082 the chain carries Phosphoserine. Residues 1144–1236 (YMVPPLPPEE…PTDYSVSASD (93 aa)) form a disordered region. The tract at residues 1147–1179 (PPLPPEEPPTMPPLPPEEPPMTPPLPPEEPPEG) is 3 X 11 AA tandem repats of P-P-L-P-P-E-E-P-P-[TME]-[MTG]. Positions 1147–1180 (PPLPPEEPPTMPPLPPEEPPMTPPLPPEEPPEGP) are enriched in pro residues. Residues 1186–1196 (QSALTAENTWP) show a composition bias toward polar residues. Positions 1198-1224 (EVPSSPSEESVSQPEPPVSQSEISEPS) are enriched in low complexity. The interval 1359-1390 (VLESSAVTVLESSTVTVLESSTVTVLEPSVVT) is 4 X 8 AA tandem repeats of V-L-E-SS-[AVT]-VT. Residues Ser-1556 and Ser-1651 each carry the phosphoserine modification. The interval 1645-1722 (TSPSGGSEAD…KETLPDSGFS (78 aa)) is disordered. The span at 1677 to 1689 (KDTEEPLPVKESD) shows a compositional bias: basic and acidic residues. Phosphoserine occurs at positions 1697, 1701, 1747, 1759, 1766, 1769, 1782, and 1783. Positions 1754-2054 (GPLLASDVGR…RSPKRLTDLD (301 aa)) are disordered. 3 stretches are compositionally biased toward basic and acidic residues: residues 1790 to 1801 (YEIFVKVKDTHE), 1809 to 1822 (RDKGEKEKKRDSSL), and 1830 to 1845 (KSSEHKSRKRTSESRS). Composition is skewed to basic residues over residues 1846–1909 (RARK…RKRS) and 1917–1948 (TVRARSRTPSRRSRSHTPSRRRRSRSVGRRRS). Tandem repeats lie at residues 1925–1931 (PSRRSRS), 1934–1952 (PSRRRRSRSVGRRRSFSIS), 1953–1959 (PSRRSRT), 1960–1966 (PSRRSRT), 1967–1973 (PSRRSRT), 1974–1980 (PSRRSRT), 1981–1987 (PSRRSRT), 1988–1994 (PSRRSRT), and 1995–2013 (PSRRRRSRSVVRRRSFSIS). The tract at residues 1925 to 1994 (PSRRSRSHTP…SRTPSRRSRT (70 aa)) is 7 X 7 AA repeats of P-S-R-R-S-R-[TS]. Positions 1934–2013 (PSRRRRSRSV…VVRRRSFSIS (80 aa)) are 2 X 19 AA repeats of P-S-R-R-R-R-S-R-S-V-V-R-R-R-S-F-S-I-S. Ser-1948, Ser-1950, and Ser-1952 each carry phosphoserine. Basic residues predominate over residues 1955–2009 (RRSRTPSRRSRTPSRRSRTPSRRSRTPSRRSRTPSRRSRTPSRRRRSRSVVRRRS). A phosphoserine mark is found at Ser-2009, Ser-2011, Ser-2013, Ser-2029, and Ser-2031. The interval 2013–2039 (SPVRLRRSRTPLRRRFSRSPIRRKRSR) is 3 X tandem repeats of [ST]-P-[VLI]-R-[RL]-[RK]-[RF]-S-R. Residues 2016-2038 (RLRRSRTPLRRRFSRSPIRRKRS) show a composition bias toward basic residues. Basic and acidic residues predominate over residues 2039-2054 (RSSERGRSPKRLTDLD). Residue Lys-2055 is modified to N6-acetyllysine; alternate. A Glycyl lysine isopeptide (Lys-Gly) (interchain with G-Cter in SUMO2); alternate cross-link involves residue Lys-2055. Residue Lys-2092 forms a Glycyl lysine isopeptide (Lys-Gly) (interchain with G-Cter in SUMO2) linkage. Ser-2129 is modified (phosphoserine). A Glycyl lysine isopeptide (Lys-Gly) (interchain with G-Cter in SUMO2) cross-link involves residue Lys-2149. Position 2163 is a phosphothreonine (Thr-2163). Positions 2200–2220 (KNGEENKDDDNVFSSNLPSEP) are disordered. Residue Ser-2238 is modified to Phosphoserine. Positions 2305–2351 (TGGMGAVLMRKMGWREGEGLGKNKEGNKEPILVDFKTDRKGLVAVGE) constitute a G-patch domain. One can recognise a DRBM domain in the interval 2371-2426 (HPVSALMEICNKRRWQPPEFLLVHDSGPDHRKHFLFRVLRNGALTRPNCMFFLNRY).

Interacts with SRSF2. Associates with the spliceosome. Interacts with the AML1-MTG8 (AML1-ETO) fusion protein, possibly leading to trigger signals inhibiting leukemogenesis. Interacts with USH1G. Widely expressed, with the higher expression seen in leukocyte and heart.

The protein resides in the nucleus speckle. In terms of biological role, RNA-binding protein that acts as a mRNA splicing cofactor by promoting efficient splicing of transcripts that possess weak splice sites. Specifically promotes splicing of many cell-cycle and DNA-repair transcripts that possess weak splice sites, such as TUBG1, KATNB1, TUBGCP2, AURKB, PCNT, AKT1, RAD23A, and FANCG. Probably acts by facilitating the interaction between Serine/arginine-rich proteins such as SRSF2 and the RNA polymerase II. Also binds to DNA; binds to the consensus DNA sequence: 5'-GA[GT]AN[CG][AG]CC-3'. May indirectly repress hepatitis B virus (HBV) core promoter activity and transcription of HBV genes and production of HBV virions. Essential for correct RNA splicing of multiple genes critical for brain development, neuronal migration and metabolism, including TUBG1, FLNA, PNKP, WDR62, PSMD3, PCK2, PFKL, IDH2, and ACY1. The sequence is that of Protein SON (SON) from Homo sapiens (Human).